The chain runs to 290 residues: Probable transcriptional regulatory protein HAH1 (290 aa).

This sequence belongs to the TACO1 family.

The protein localises to the mitochondrion. The chain is Probable transcriptional regulatory protein HAH1 from Saccharomyces cerevisiae (strain ATCC 204508 / S288c) (Baker's yeast).